Reading from the N-terminus, the 153-residue chain is MRLHELSPAPGSRKDRKRVGRGDAGRGNYSGRGMKGQKARSGGATRPGFEGGQLPIYLRLPRKRGFFNPFRIKYAVVNIEQLNMFEAGTEVTPETLLAAGLIRNFVKPVKILSSGHIDRALEVSAHKFSQAAKAQIEAAGGKVQEIDYAAEIE.

Residues 1–47 form a disordered region; it reads MRLHELSPAPGSRKDRKRVGRGDAGRGNYSGRGMKGQKARSGGATRP.

The protein belongs to the universal ribosomal protein uL15 family. In terms of assembly, part of the 50S ribosomal subunit.

In terms of biological role, binds to the 23S rRNA. This is Large ribosomal subunit protein uL15 from Dehalococcoides mccartyi (strain ATCC BAA-2100 / JCM 16839 / KCTC 5957 / BAV1).